Reading from the N-terminus, the 189-residue chain is Recombination protein RecR (189 aa).

A C4-type zinc finger spans residues 48-63 (CQTCFHLSAEPLCDIC). Positions 71-165 (QLLCVVADSR…QVSRIAYGLP (95 aa)) constitute a Toprim domain.

It belongs to the RecR family.

In terms of biological role, may play a role in DNA repair. It seems to be involved in an RecBC-independent recombinational process of DNA repair. It may act with RecF and RecO. In Prochlorococcus marinus (strain MIT 9313), this protein is Recombination protein RecR.